A 1028-amino-acid polypeptide reads, in one-letter code: Ubiquitin conjugation factor E4 A (1028 aa).

Positions 33–57 (KEQLKQQSDELPASPDDSDNSVSES) are disordered. Lys386 bears the N6-acetyllysine mark. Positions 949-1023 (DACDEFLDPI…QRWLAERKQQ (75 aa)) constitute a U-box domain.

The protein belongs to the ubiquitin conjugation factor E4 family. Expressed in liver, heart, brain, kidney and testis.

The protein resides in the cytoplasm. It carries out the reaction S-ubiquitinyl-[E2 ubiquitin-conjugating enzyme]-L-cysteine + [acceptor protein]-L-lysine = [E2 ubiquitin-conjugating enzyme]-L-cysteine + N(6)-ubiquitinyl-[acceptor protein]-L-lysine.. It participates in protein modification; protein ubiquitination. In terms of biological role, ubiquitin-protein ligase that probably functions as an E3 ligase in conjunction with specific E1 and E2 ligases. May also function as an E4 ligase mediating the assembly of polyubiquitin chains on substrates ubiquitinated by another E3 ubiquitin ligase. Mediates 'Lys-48'-linked polyubiquitination of substrates. In Mus musculus (Mouse), this protein is Ubiquitin conjugation factor E4 A.